The following is a 681-amino-acid chain: DNA ligase (681 aa).

NAD(+)-binding positions include 33–37 (DGQFD), 83–84 (SL), and Glu-113. The active-site N6-AMP-lysine intermediate is the Lys-115. 4 residues coordinate NAD(+): Arg-136, Glu-176, Lys-292, and Lys-316. Residues Cys-410, Cys-413, Cys-429, and Cys-435 each coordinate Zn(2+). One can recognise a BRCT domain in the interval 599-681 (SIPRNLEGLS…RALLADGPPA (83 aa)).

Belongs to the NAD-dependent DNA ligase family. LigA subfamily. It depends on Mg(2+) as a cofactor. Mn(2+) serves as cofactor.

The enzyme catalyses NAD(+) + (deoxyribonucleotide)n-3'-hydroxyl + 5'-phospho-(deoxyribonucleotide)m = (deoxyribonucleotide)n+m + AMP + beta-nicotinamide D-nucleotide.. Functionally, DNA ligase that catalyzes the formation of phosphodiester linkages between 5'-phosphoryl and 3'-hydroxyl groups in double-stranded DNA using NAD as a coenzyme and as the energy source for the reaction. It is essential for DNA replication and repair of damaged DNA. The chain is DNA ligase from Mycobacteroides abscessus (strain ATCC 19977 / DSM 44196 / CCUG 20993 / CIP 104536 / JCM 13569 / NCTC 13031 / TMC 1543 / L948) (Mycobacterium abscessus).